We begin with the raw amino-acid sequence, 660 residues long: T-box protein H15 (660 aa).

Polar residues predominate over residues 1–11 (MLLSNQPANTK). Disordered stretches follow at residues 1–72 (MLLS…NHNQ), 90–122 (GGNAPSSREPSERSLSPASVERYSGQDADDDVD), and 169–266 (QQQQ…PKIV). Residues 12-22 (PQQTPSPSQTQ) show a composition bias toward low complexity. Residues 23–33 (NFKSKLQQQIV) show a composition bias toward polar residues. Residues 35-47 (AAAAAAANIANGS) show a composition bias toward low complexity. Positions 48–71 (SHHHHHQNHHHHHPLNNHHNHNHN) are enriched in basic residues. Low complexity-rich tracts occupy residues 93–108 (APSSREPSERSLSPAS) and 169–179 (QQQQQQQQQRQ). A compositionally biased stretch (basic residues) spans 180–198 (QTHHHATTGKQQRQHHNHH). Positions 199–233 (SSNTNNSSNSGNSNTNSKSSSQRGRSAAAVGAAAT) are enriched in low complexity. Residues 234–243 (PSPPPPPPSQ) show a composition bias toward pro residues. The segment at residues 286-472 (LWDKFHELGT…SNPFAKGFRD (187 aa)) is a DNA-binding region (T-box). The tract at residues 598 to 660 (NRTPPPSMAV…PPASNRAESP (63 aa)) is disordered. Pro residues predominate over residues 600-613 (TPPPSMAVAPPAPA). A compositionally biased stretch (low complexity) spans 614–624 (TPTSSCGSASP). Positions 643–660 (QVPQHQASPPASNRAESP) are enriched in polar residues.

It localises to the nucleus. In Drosophila melanogaster (Fruit fly), this protein is T-box protein H15 (H15).